Here is a 104-residue protein sequence, read N- to C-terminus: Small ribosomal subunit protein uS10 (104 aa).

It belongs to the universal ribosomal protein uS10 family. Part of the 30S ribosomal subunit.

Involved in the binding of tRNA to the ribosomes. This is Small ribosomal subunit protein uS10 from Nitrosococcus oceani (strain ATCC 19707 / BCRC 17464 / JCM 30415 / NCIMB 11848 / C-107).